The sequence spans 158 residues: Transcription elongation factor GreA (158 aa).

Residues 45–73 (AEYHAAREQQSFIEGRIKQLESELSHAEI) adopt a coiled-coil conformation.

The protein belongs to the GreA/GreB family.

Functionally, necessary for efficient RNA polymerase transcription elongation past template-encoded arresting sites. The arresting sites in DNA have the property of trapping a certain fraction of elongating RNA polymerases that pass through, resulting in locked ternary complexes. Cleavage of the nascent transcript by cleavage factors such as GreA or GreB allows the resumption of elongation from the new 3'terminus. GreA releases sequences of 2 to 3 nucleotides. The protein is Transcription elongation factor GreA of Xanthomonas axonopodis pv. citri (strain 306).